Reading from the N-terminus, the 396-residue chain is Inositol polyphosphate multikinase (396 aa).

The segment covering 1–13 (MAAEPPALRLRPP) has biased composition (low complexity). Residues 1-22 (MAAEPPALRLRPPGSTGDSPPV) form a disordered region. Alanine 2 is modified (N-acetylalanine). Serine 19 bears the Phosphoserine mark. Lysine 58 lines the ATP pocket. Arginine 65 is a binding site for substrate. ATP contacts are provided by residues 114-116 (EDV) and aspartate 127. Substrate contacts are provided by residues lysine 129, 143-150 (KIQQQVSK), and glutamine 179. The short motif at 300 to 310 (RHRKLYAKKHQ) is the Nuclear localization signal element. Position 365 (aspartate 365) interacts with ATP.

This sequence belongs to the inositol phosphokinase (IPK) family. Mg(2+) is required as a cofactor.

It is found in the nucleus. The enzyme catalyses 1D-myo-inositol 1,4,5-trisphosphate + 2 ATP = 1D-myo-inositol 1,3,4,5,6-pentakisphosphate + 2 ADP + 2 H(+). The catalysed reaction is 1D-myo-inositol 1,3,4,6-tetrakisphosphate + ATP = 1D-myo-inositol 1,3,4,5,6-pentakisphosphate + ADP + H(+). It catalyses the reaction 1-octadecanoyl-2-(5Z,8Z,11Z,14Z)-eicosatetraenoyl-sn-glycero-3-phospho-1D-myo-inositol 4,5-bisphosphate + ATP = 1-octadecanoyl-2-(5Z,8Z,11Z,14Z-eicosatetraenoyl)-sn-glycero-3-phospho-(1D-myo-inositol 3,4,5-triphosphate) + ADP + H(+). It carries out the reaction a 1,2-diacyl-sn-glycero-3-phospho-(1D-myo-inositol-4,5-bisphosphate) + ATP = a 1,2-diacyl-sn-glycero-3-phospho-(1D-myo-inositol-3,4,5-trisphosphate) + ADP + H(+). The enzyme catalyses 1D-myo-inositol 1,4,5,6-tetrakisphosphate + ATP = 1D-myo-inositol 1,3,4,5,6-pentakisphosphate + ADP + H(+). The protein operates within phospholipid metabolism; phosphatidylinositol metabolism. Its function is as follows. Inositol phosphate kinase with a broad substrate specificity. Phosphorylates inositol 1,4,5-trisphosphate (Ins(1,4,5)P3) first to inositol 1,3,4,5-tetrakisphosphate and then to inositol 1,3,4,5,6-pentakisphosphate (Ins(1,3,4,5,6)P5). Phosphorylates inositol 1,3,4,6-tetrakisphosphate (Ins(1,3,4,6)P4). Phosphorylates inositol 1,4,5,6-tetrakisphosphate (Ins(1,4,5,6)P4). Phosphorylates glycero-3-phospho-1D-myo-inositol 4,5-bisphosphate to glycero-3-phospho-1D-myo-inositol 3,4,5-trisphosphate. Plays an important role in MLKL-mediated necroptosis via its role in the biosynthesis of inositol pentakisphosphate (InsP5) and inositol hexakisphosphate (InsP6). Binding of these highly phosphorylated inositol phosphates to MLKL mediates the release of an N-terminal auto-inhibitory region, leading to activation of the kinase. Essential for activated phospho-MLKL to oligomerize and localize to the cell membrane during necroptosis. Required for normal embryonic development, probably via its role in the biosynthesis of inositol 1,3,4,5,6-pentakisphosphate (Ins(1,3,4,5,6)P5) and inositol hexakisphosphate (InsP6). In Mus musculus (Mouse), this protein is Inositol polyphosphate multikinase (Ipmk).